The following is a 436-amino-acid chain: T-box transcription factor TBX6 (436 aa).

The tract at residues 67 to 87 (PLLPSALGPETAPPPPEALHS) is disordered. A DNA-binding region (T-box) is located at residues 100–273 (LWKEFSAVGT…ANPFAKGFRE (174 aa)). A compositionally biased stretch (basic and acidic residues) spans 275–284 (GRNCKRERDA). Disordered regions lie at residues 275–344 (GRNC…CGGP) and 360–383 (PSHLPARTPSFPEAPDPGRPAPYS). The span at 332–344 (EAASASAPPCGGP) shows a compositional bias: low complexity.

The protein resides in the nucleus. In terms of biological role, T-box transcription factor that plays an essential role in the determination of the fate of axial stem cells: neural vs mesodermal. Acts in part by down-regulating, a specific enhancer (N1) of SOX2, to inhibit neural development. Seems to also play an essential role in left/right axis determination and acts through effects on Notch signaling around the node as well as through an effect on the morphology and motility of the nodal cilia. The protein is T-box transcription factor TBX6 (Tbx6) of Rattus norvegicus (Rat).